The following is a 183-amino-acid chain: Mitochondrial import inner membrane translocase subunit tim17 (183 aa).

Transmembrane regions (helical) follow at residues 13 to 33, 57 to 77, and 107 to 127; these read AGGA…GLGF, GGNF…LSYI, and VQAA…QHMM. The segment covering 131 to 141 has biased composition (polar residues); sequence MQAQQEEMTQQ. The segment at 131-183 is disordered; sequence MQAQQEEMTQQHLEERKRYEEERKQREGERKKLNENGKSKKNKQQQNGENDLD. Residues 142 to 168 are compositionally biased toward basic and acidic residues; sequence HLEERKRYEEERKQREGERKKLNENGK. The span at 174-183 shows a compositional bias: low complexity; that stretch reads QQQNGENDLD.

This sequence belongs to the Tim17/Tim22/Tim23 family.

Its subcellular location is the mitochondrion inner membrane. Its function is as follows. May be involved in the translocation of transit peptide-containing proteins across the mitochondrial inner membrane. This chain is Mitochondrial import inner membrane translocase subunit tim17 (timm17), found in Dictyostelium discoideum (Social amoeba).